Here is a 241-residue protein sequence, read N- to C-terminus: F-box protein At3g22350 (241 aa).

The F-box domain occupies 1–44 (MSDLPLDLVEEILSRVSATSLKRLRSTCKQWNTLFKKRSFSQKH).

The chain is F-box protein At3g22350 from Arabidopsis thaliana (Mouse-ear cress).